The sequence spans 326 residues: Beta-ketoacyl-[acyl-carrier-protein] synthase III (326 aa).

Residues Cys112 and His251 contribute to the active site. An ACP-binding region spans residues 252 to 256 (QANSR). Asn281 is a catalytic residue.

This sequence belongs to the thiolase-like superfamily. FabH family. Homodimer.

It localises to the cytoplasm. It catalyses the reaction malonyl-[ACP] + acetyl-CoA + H(+) = 3-oxobutanoyl-[ACP] + CO2 + CoA. It participates in lipid metabolism; fatty acid biosynthesis. In terms of biological role, catalyzes the condensation reaction of fatty acid synthesis by the addition to an acyl acceptor of two carbons from malonyl-ACP. Catalyzes the first condensation reaction which initiates fatty acid synthesis and may therefore play a role in governing the total rate of fatty acid production. Possesses both acetoacetyl-ACP synthase and acetyl transacylase activities. Its substrate specificity determines the biosynthesis of branched-chain and/or straight-chain of fatty acids. The protein is Beta-ketoacyl-[acyl-carrier-protein] synthase III of Clostridium botulinum (strain 657 / Type Ba4).